The chain runs to 354 residues: Uroporphyrinogen decarboxylase (354 aa).

Residues 27-31 (RQAGR), phenylalanine 46, aspartate 77, tyrosine 153, threonine 208, and histidine 326 each bind substrate.

This sequence belongs to the uroporphyrinogen decarboxylase family. Homodimer.

The protein resides in the cytoplasm. It carries out the reaction uroporphyrinogen III + 4 H(+) = coproporphyrinogen III + 4 CO2. It participates in porphyrin-containing compound metabolism; protoporphyrin-IX biosynthesis; coproporphyrinogen-III from 5-aminolevulinate: step 4/4. Functionally, catalyzes the decarboxylation of four acetate groups of uroporphyrinogen-III to yield coproporphyrinogen-III. This chain is Uroporphyrinogen decarboxylase, found in Neisseria meningitidis serogroup B (strain ATCC BAA-335 / MC58).